The sequence spans 149 residues: Large ribosomal subunit protein bL9 (149 aa).

Belongs to the bacterial ribosomal protein bL9 family.

Binds to the 23S rRNA. The chain is Large ribosomal subunit protein bL9 from Xylella fastidiosa (strain 9a5c).